We begin with the raw amino-acid sequence, 599 residues long: Spermatogenesis-associated protein 7 (599 aa).

Residues 163–205 (KSSKVITNGPEKNSSSSPSSVDYAASGPRKLSSGALYGRRPRS) form a disordered region. Residues 166–175 (KVITNGPEKN) show a composition bias toward polar residues.

Found in a complex with CFAP410, NEK1 and SPATA7. Interacts with NEK1. Interacts with RPGRIP1. Interacts with RPGR. Interacts with NPHP4. Interacts with NPHP1. Interacts with AHI1.

It is found in the cytoplasm. The protein resides in the cytoskeleton. It localises to the cilium axoneme. The protein localises to the cilium basal body. Its subcellular location is the cell projection. It is found in the cilium. The protein resides in the photoreceptor outer segment. Involved in the maintenance of both rod and cone photoreceptor cells. It is required for recruitment and proper localization of RPGRIP1 to the photoreceptor connecting cilium (CC), as well as photoreceptor-specific localization of proximal CC proteins at the distal CC. Maintenance of protein localization at the photoreceptor-specific distal CC is essential for normal microtubule stability and to prevent photoreceptor degeneration. This is Spermatogenesis-associated protein 7 (SPATA7) from Homo sapiens (Human).